A 281-amino-acid chain; its full sequence is Glyceraldehyde dehydrogenase medium chain (281 aa).

The FAD-binding PCMH-type domain occupies 1 to 176 (MYPPEFSYVR…TQIEVPVLDG (176 aa)). FAD is bound by residues 31-35 (AGGQS) and 110-114 (TIGGA).

In terms of assembly, heterotrimer composed of a large chain (CutA), a medium chain (CutB) and a small chain (CutC). FAD serves as cofactor.

It localises to the cytoplasm. It catalyses the reaction D-glyceraldehyde + A + H2O = (R)-glycerate + AH2 + H(+). Its function is as follows. Component of the glyceraldehyde dehydrogenase which is involved the nonphosphorylated Entner-Doudoroff pathway. Catalyzes the oxidation of D-glyceraldehyde to yield glycerate. When the artificial electron acceptor 2,6-dichlorophenol-indophenol (Cl2Ind) is used, the enzyme shows a broad substrate range (glyceraldehyde-3-phosphate, formaldehyde, acetaldehyde, propionaldehyde and isobutyraldehyde), but is most active with D-glyceraldehyde. It is not known which acceptor is utilized in vivo. The polypeptide is Glyceraldehyde dehydrogenase medium chain (cutB) (Sulfolobus acidocaldarius (strain ATCC 33909 / DSM 639 / JCM 8929 / NBRC 15157 / NCIMB 11770)).